The chain runs to 180 residues: Pro-glucagon (180 aa).

The signal sequence occupies residues 1–20 (MKSIYFVAGLFVMLVQGSWQ). The tract at residues 26–59 (TEEKSRSFSASQADPLSDPDQMNEDKRHSQGTFT) is disordered. Serine 54 is subject to Phosphoserine. A propeptide spanning residues 84–89 (NRNNIA) is cleaved from the precursor. Phosphoserine occurs at positions 105 and 108. Arginine 127 bears the Arginine amide mark. Residues 131–145 (DFPEEVAIVEELGRR) constitute a propeptide that is removed on maturation. A phosphoserine mark is found at serine 150 and serine 152.

The protein belongs to the glucagon family. Post-translationally, proglucagon is post-translationally processed in a tissue-specific manner in pancreatic A cells and intestinal L cells. In pancreatic A cells, the major bioactive hormone is glucagon cleaved by PCSK2/PC2. In the intestinal L cells PCSK1/PC1 liberates GLP-1, GLP-2, glicentin and oxyntomodulin. GLP-1 is further N-terminally truncated by post-translational processing in the intestinal L cells resulting in GLP-1(7-37) GLP-1-(7-36)amide. The C-terminal amidation is neither important for the metabolism of GLP-1 nor for its effects on the endocrine pancreas. In terms of tissue distribution, secreted in the A cells of the islets of Langerhans. As to expression, secreted in the A cells of the islets of Langerhans. Secreted from enteroendocrine L cells throughout the gastrointestinal tract. Also secreted in selected neurons in the brain. Secreted from enteroendocrine cells throughout the gastrointestinal tract. Also secreted in selected neurons in the brain. In terms of tissue distribution, secreted from enteroendocrine cells throughout the gastrointestinal tract.

It localises to the secreted. Its function is as follows. Plays a key role in glucose metabolism and homeostasis. Regulates blood glucose by increasing gluconeogenesis and decreasing glycolysis. A counterregulatory hormone of insulin, raises plasma glucose levels in response to insulin-induced hypoglycemia. Plays an important role in initiating and maintaining hyperglycemic conditions in diabetes. Potent stimulator of glucose-dependent insulin release. Also stimulates insulin release in response to IL6. Plays important roles on gastric motility and the suppression of plasma glucagon levels. May be involved in the suppression of satiety and stimulation of glucose disposal in peripheral tissues, independent of the actions of insulin. Has growth-promoting activities on intestinal epithelium. May also regulate the hypothalamic pituitary axis (HPA) via effects on LH, TSH, CRH, oxytocin, and vasopressin secretion. Increases islet mass through stimulation of islet neogenesis and pancreatic beta cell proliferation. Inhibits beta cell apoptosis. Functionally, stimulates intestinal growth and up-regulates villus height in the small intestine, concomitant with increased crypt cell proliferation and decreased enterocyte apoptosis. The gastrointestinal tract, from the stomach to the colon is the principal target for GLP-2 action. Plays a key role in nutrient homeostasis, enhancing nutrient assimilation through enhanced gastrointestinal function, as well as increasing nutrient disposal. Stimulates intestinal glucose transport and decreases mucosal permeability. In terms of biological role, significantly reduces food intake. Inhibits gastric emptying in humans. Suppression of gastric emptying may lead to increased gastric distension, which may contribute to satiety by causing a sensation of fullness. Its function is as follows. May modulate gastric acid secretion and the gastro-pyloro-duodenal activity. May play an important role in intestinal mucosal growth in the early period of life. The polypeptide is Pro-glucagon (Homo sapiens (Human)).